The sequence spans 438 residues: Glutamyl-tRNA reductase (438 aa).

Residues 49 to 52 (TCNR), S109, 114 to 116 (EGQ), and Q120 each bind substrate. C50 (nucleophile) is an active-site residue. 198–203 (GAGRMS) contributes to the NADP(+) binding site.

Belongs to the glutamyl-tRNA reductase family. As to quaternary structure, homodimer.

It catalyses the reaction (S)-4-amino-5-oxopentanoate + tRNA(Glu) + NADP(+) = L-glutamyl-tRNA(Glu) + NADPH + H(+). The protein operates within porphyrin-containing compound metabolism; protoporphyrin-IX biosynthesis; 5-aminolevulinate from L-glutamyl-tRNA(Glu): step 1/2. It functions in the pathway porphyrin-containing compound metabolism; chlorophyll biosynthesis. In terms of biological role, catalyzes the NADPH-dependent reduction of glutamyl-tRNA(Glu) to glutamate 1-semialdehyde (GSA). The sequence is that of Glutamyl-tRNA reductase from Synechococcus sp. (strain WH7803).